The sequence spans 222 residues: ATP synthase F(0) complex subunit a (222 aa).

Transmembrane regions (helical) follow at residues 7 to 27 (AFFD…AILL), 64 to 84 (WSLM…LGLL), 93 to 113 (QLTV…ILGF), 132 to 152 (FLIP…PVTL), 160 to 180 (ITAG…LLSI), and 185 to 205 (ITVT…VALI).

This sequence belongs to the ATPase A chain family. In terms of assembly, component of the ATP synthase complex composed at least of ATP5F1A/subunit alpha, ATP5F1B/subunit beta, ATP5MC1/subunit c (homooctomer), MT-ATP6/subunit a, MT-ATP8/subunit 8, ATP5ME/subunit e, ATP5MF/subunit f, ATP5MG/subunit g, ATP5MK/subunit k, ATP5MJ/subunit j, ATP5F1C/subunit gamma, ATP5F1D/subunit delta, ATP5F1E/subunit epsilon, ATP5PF/subunit F6, ATP5PB/subunit b, ATP5PD/subunit d, ATP5PO/subunit OSCP. ATP synthase complex consists of a soluble F(1) head domain (subunits alpha(3) and beta(3)) - the catalytic core - and a membrane F(0) domain - the membrane proton channel (subunits c, a, 8, e, f, g, k and j). These two domains are linked by a central stalk (subunits gamma, delta, and epsilon) rotating inside the F1 region and a stationary peripheral stalk (subunits F6, b, d, and OSCP). Interacts with DNAJC30; interaction is direct.

Its subcellular location is the mitochondrion inner membrane. The enzyme catalyses H(+)(in) = H(+)(out). Functionally, subunit a, of the mitochondrial membrane ATP synthase complex (F(1)F(0) ATP synthase or Complex V) that produces ATP from ADP in the presence of a proton gradient across the membrane which is generated by electron transport complexes of the respiratory chain. ATP synthase complex consist of a soluble F(1) head domain - the catalytic core - and a membrane F(1) domain - the membrane proton channel. These two domains are linked by a central stalk rotating inside the F(1) region and a stationary peripheral stalk. During catalysis, ATP synthesis in the catalytic domain of F(1) is coupled via a rotary mechanism of the central stalk subunits to proton translocation. With the subunit c (ATP5MC1), forms the proton-conducting channel in the F(0) domain, that contains two crucial half-channels (inlet and outlet) that facilitate proton movement from the mitochondrial intermembrane space (IMS) into the matrix. Protons are taken up via the inlet half-channel and released through the outlet half-channel, following a Grotthuss mechanism. In Mammuthus primigenius (Siberian woolly mammoth), this protein is ATP synthase F(0) complex subunit a.